The following is a 568-amino-acid chain: Tetratricopeptide repeat protein 22 (568 aa).

TPR repeat units lie at residues 66 to 99 (PAVR…DPGN), 101 to 133 (NAWA…MGLE), 155 to 190 (YAHG…GQQI), 203 to 237 (ATLF…LGEV), 260 to 294 (KDTF…AKNQ), 296 to 328 (PILN…LTDP), and 432 to 465 (PELQ…DDEG).

In Mus musculus (Mouse), this protein is Tetratricopeptide repeat protein 22 (Ttc22).